The following is a 305-amino-acid chain: MAEASAAGADAGSAVAAHRFFCHFCKGEVNPKLPEYICPRCDSGFIEEVTDDSSFLGGGGSRTDNSTATHFAELWDHLDHTMFLQDFRPFLSSNPLDQDNRANERGHQTHTDFWGPSRPPRLPMTRRYRSRGSTRPDRSPAIEGIIQQIFAGFFANSAIPGSPHPFSWSGMLHSNPGDYAWGQTGLDAIVTQLLGQLENTGPPPADKEKITSLPTVTVTQEQVNTGLECPVCKEDYTVEEKVRQLPCNHFFHSSCIVPWLELHDTCPVCRKSLNGEDSTRQTQSSEASASNRFSNDSQLHDRWTF.

At A2 the chain carries N-acetylalanine. Positions 100–110 (NRANERGHQTH) are enriched in basic and acidic residues. The segment at 100 to 139 (NRANERGHQTHTDFWGPSRPPRLPMTRRYRSRGSTRPDRS) is disordered. Phosphoserine is present on S133. The segment at 229–270 (CPVCKEDYTVEEKVRQLPCNHFFHSSCIVPWLELHDTCPVCR) adopts an RING-type zinc-finger fold. Residues 274–305 (NGEDSTRQTQSSEASASNRFSNDSQLHDRWTF) form a disordered region. The span at 280 to 297 (RQTQSSEASASNRFSNDS) shows a compositional bias: polar residues.

As to quaternary structure, interacts with RAB7A. Interacts with EGFR and FLT3. Interacts with BST2. Interacts with STX17. Interacts with YWHAE. Post-translationally, phosphorylated by AKT1, allowing association with the 14-3-3 chaperones that facilitates associating with TLRs. Deubiquitinated by USP9X; antogonizing its autoubiquitination and subsequent proteasomal degradation. In terms of processing, RING-type zinc finger-dependent and E2-dependent autoubiquitination.

It localises to the cytoplasm. It is found in the cytoplasmic vesicle. The protein localises to the phagosome. The protein resides in the nucleus. Its subcellular location is the endoplasmic reticulum. It localises to the golgi apparatus. The enzyme catalyses S-ubiquitinyl-[E2 ubiquitin-conjugating enzyme]-L-cysteine + [acceptor protein]-L-lysine = [E2 ubiquitin-conjugating enzyme]-L-cysteine + N(6)-ubiquitinyl-[acceptor protein]-L-lysine.. It functions in the pathway protein modification; protein ubiquitination. In terms of biological role, E3 ubiquitin-protein ligase that catalyzes the 'Lys-48'- and/or 'Lys-63'-linked polyubiquitination of various substrates and thereby plays a role in a number of signaling pathways including autophagy, innate immunity, cell proliferation and cell death. Plays a role in the endosomal trafficking and degradation of membrane receptors including EGFR, FLT3, MET and CXCR4 through their polyubiquitination. Participates together with BST2 in antiviral immunity by facilitating the internalization of HIV-1 virions into intracellular vesicles leading to their lysosomal degradation. Also possesses an antiviral activity independently of BST2 by promoting retroviral GAG proteins ubiquitination, redistribution to endo-lysosomal compartments and, ultimately, lysosomal degradation. Catalyzes distinct types of ubiquitination on MAVS and STING1 at different phases of viral infection to promote innate antiviral response. Mediates the 'Lys-48'-linked ubiquitination of MAVS leading to its proteasomal degradation and ubiquitinates STING1 via 'Lys-63'-linked polyubiquitination, critical for its oligomerization and the subsequent recruitment of TBK1. Plays a positive role in the autophagosome-lysosome fusion by interacting with STX17 and enhancing its stability without affecting 'Lys-48'- or 'Lys-63'-linked polyubiquitination levels, which in turn promotes autophagosome maturation. Negatively regulates TLR-induced expression of proinflammatory cytokines by catalyzing 'Lys-11'-linked ubiquitination of RAB1A and RAB13 to inhibit post-ER trafficking of TLRs to the Golgi by RAB1A and subsequently from the Golgi apparatus to the cell surface by RAB13. This Mus musculus (Mouse) protein is E3 ubiquitin-protein ligase RNF115.